The chain runs to 357 residues: Spermatogenesis- and oogenesis-specific basic helix-loop-helix-containing protein 1 (357 aa).

Residues 1 to 14 show a composition bias toward basic and acidic residues; it reads MASGGHERANEDYR. Residues 1 to 40 are disordered; it reads MASGGHERANEDYRVSGITGCSKTPQPETQDSLQTSSQSS. A compositionally biased stretch (polar residues) spans 19 to 31; the sequence is TGCSKTPQPETQD. The region spanning 54–105 is the bHLH domain; the sequence is PSLRRNVVSERERRRRISLSCEHLRALLPQFDGRREDMASVLEMSVYFLQLA. Residues 145-210 are disordered; that stretch reads KPDSGIAKPS…EPESSSLGPG (66 aa). The span at 200-209 shows a compositional bias: low complexity; that stretch reads SEPESSSLGP.

Forms both hetero- and homodimers with SOHLH2. In terms of tissue distribution, in males, it is mainly expressed in testis, while in females it is mainly expressed in ovary. In testis, it is exclusively expressed in spermatogonia, with a preference for prespermatogonia and type A spermatogonia. In ovary, it is detected in germ cell cysts, primordial follicles, and primary follicles but is undetectable by the secondary follicle stage (at protein level). Expressed in the majority of spermatogonia in adult animals, but not in the most undifferentiated spermatogonial population.

It is found in the cytoplasm. The protein localises to the nucleus. In terms of biological role, transcription regulator of both male and female germline differentiation. Suppresses genes involved in spermatogonial stem cells maintenance, and induces genes important for spermatogonial differentiation. Coordinates oocyte differentiation without affecting meiosis I. The protein is Spermatogenesis- and oogenesis-specific basic helix-loop-helix-containing protein 1 (Sohlh1) of Mus musculus (Mouse).